The sequence spans 116 residues: NADH dehydrogenase [ubiquinone] 1 alpha subcomplex subunit 5 (116 aa).

N-acetylalanine is present on alanine 2. Residues lysine 30, lysine 36, lysine 46, and lysine 60 each carry the N6-acetyllysine modification. Position 89 is a phosphoserine (serine 89). The residue at position 98 (lysine 98) is an N6-acetyllysine; alternate. Lysine 98 is subject to N6-succinyllysine; alternate.

It belongs to the complex I NDUFA5 subunit family. As to quaternary structure, complex I is composed of 45 different subunits. Acetylation of Lys-98 is observed in liver mitochondria from fasted mice but not from fed mice.

The protein localises to the mitochondrion inner membrane. Its function is as follows. Accessory subunit of the mitochondrial membrane respiratory chain NADH dehydrogenase (Complex I), that is believed not to be involved in catalysis. Complex I functions in the transfer of electrons from NADH to the respiratory chain. The immediate electron acceptor for the enzyme is believed to be ubiquinone. This is NADH dehydrogenase [ubiquinone] 1 alpha subcomplex subunit 5 (Ndufa5) from Mus musculus (Mouse).